Consider the following 173-residue polypeptide: Inorganic pyrophosphatase (173 aa).

Residues lysine 28, arginine 42, and tyrosine 54 each coordinate substrate. Positions 64, 69, and 101 each coordinate Mg(2+). Tyrosine 140 provides a ligand contact to substrate.

Belongs to the PPase family. In terms of assembly, homohexamer. Mg(2+) serves as cofactor.

Its subcellular location is the cytoplasm. The catalysed reaction is diphosphate + H2O = 2 phosphate + H(+). Functionally, catalyzes the hydrolysis of inorganic pyrophosphate (PPi) forming two phosphate ions. This is Inorganic pyrophosphatase from Helicobacter pylori (strain ATCC 700392 / 26695) (Campylobacter pylori).